A 351-amino-acid polypeptide reads, in one-letter code: MKALAKLKKEPGIWMIDDAPMPEYGYNDVLIKIKKTAICGTDLHIYNWDKWSQATIPVPMITGHEFAGEVVAKGNGVTSVDVGDRVSGEGHLVCGQCRNCRAGKRHLCRKTIGIGVNVQGAFAEYLVMPAVNVFKIPDSISDDIASTFDPMGNAIHTALSFNLTGEDVLITGAGPIGLMAVKIARFCGARRIVITDINKYRLQMARDFGATVAVNVSEFQNQQQLTAQMRKVMSEIGMTEGFDVGLEMSGINSAISMMLDVMNHGGKLSLLGISAGDISVDWGAILFKGLTLKGIYGREMFETWYLMTSMLQAGMDMEPIITHRLHIDDYQKGFEIMKSGQCGKVILDWSR.

Cysteine 39 contacts Zn(2+). Residues threonine 41 and histidine 44 each act as charge relay system in the active site. Residues histidine 64, glutamate 65, cysteine 94, cysteine 97, cysteine 100, and cysteine 108 each coordinate Zn(2+). NAD(+)-binding positions include isoleucine 176, aspartate 196, arginine 201, 271–273 (LGI), and 295–296 (IY).

The protein belongs to the zinc-containing alcohol dehydrogenase family. Homotetramer. The cofactor is Zn(2+).

It localises to the cytoplasm. The enzyme catalyses L-threonine + NAD(+) = (2S)-2-amino-3-oxobutanoate + NADH + H(+). Its pathway is amino-acid degradation; L-threonine degradation via oxydo-reductase pathway; glycine from L-threonine: step 1/2. In terms of biological role, catalyzes the NAD(+)-dependent oxidation of L-threonine to 2-amino-3-ketobutyrate. The sequence is that of L-threonine 3-dehydrogenase from Francisella philomiragia subsp. philomiragia (strain ATCC 25017 / CCUG 19701 / FSC 153 / O#319-036).